Consider the following 372-residue polypeptide: Heterogeneous nuclear rnp K-like protein 2 (372 aa).

Residues 1-23 show a composition bias toward polar residues; it reads MSDINDPNSISLPVGSSCTSRGA. The interval 1–49 is disordered; that stretch reads MSDINDPNSISLPVGSSCTSRGASTETFTTSRSTTLFSSQQESKDEGNV. Residues 24–39 show a composition bias toward low complexity; that stretch reads STETFTTSRSTTLFSS. KH domains are found at residues 59 to 123, 167 to 232, and 283 to 354; these read TINH…LGQI, IGTS…LLQI, and EFKA…ESML.

This sequence belongs to the HEK2 family. In terms of assembly, binds RNA.

Its subcellular location is the cytoplasm. The protein resides in the P-body. The protein localises to the nucleus. It localises to the chromosome. It is found in the telomere. In terms of biological role, RNA-binding protein involved in the correct localization of transcripts in the cell. RNA localization is a widespread mechanism for achieving localized protein synthesis. Involved in structural and functional organization of telomeric chromatin and regulates silencing at the HMR locus. This Zygosaccharomyces rouxii (strain ATCC 2623 / CBS 732 / NBRC 1130 / NCYC 568 / NRRL Y-229) protein is Heterogeneous nuclear rnp K-like protein 2 (HEK2).